A 465-amino-acid chain; its full sequence is Ribulose bisphosphate carboxylase large chain (465 aa).

Lys4 bears the N6,N6,N6-trimethyllysine mark. Substrate-binding residues include Asn113 and Thr163. Lys165 functions as the Proton acceptor in the catalytic mechanism. A substrate-binding site is contributed by Lys167. 3 residues coordinate Mg(2+): Lys191, Asp193, and Glu194. Lys191 bears the N6-carboxylysine mark. The active-site Proton acceptor is His284. The substrate site is built by Arg285, His317, and Ser369.

This sequence belongs to the RuBisCO large chain family. Type I subfamily. In terms of assembly, heterohexadecamer of 8 large chains and 8 small chains; disulfide-linked. The disulfide link is formed within the large subunit homodimers. It depends on Mg(2+) as a cofactor. Post-translationally, the disulfide bond which can form in the large chain dimeric partners within the hexadecamer appears to be associated with oxidative stress and protein turnover.

The protein resides in the plastid. The protein localises to the chloroplast. The catalysed reaction is 2 (2R)-3-phosphoglycerate + 2 H(+) = D-ribulose 1,5-bisphosphate + CO2 + H2O. It catalyses the reaction D-ribulose 1,5-bisphosphate + O2 = 2-phosphoglycolate + (2R)-3-phosphoglycerate + 2 H(+). Functionally, ruBisCO catalyzes two reactions: the carboxylation of D-ribulose 1,5-bisphosphate, the primary event in carbon dioxide fixation, as well as the oxidative fragmentation of the pentose substrate in the photorespiration process. Both reactions occur simultaneously and in competition at the same active site. This is Ribulose bisphosphate carboxylase large chain from Humiria balsamifera (Tauroniro).